A 323-amino-acid polypeptide reads, in one-letter code: Ankyrin repeat and SOCS box protein 11 (323 aa).

ANK repeat units lie at residues 64–93, 97–126, 130–159, 162–191, 195–224, and 227–256; these read ADRS…NVNL, NRVS…HVNG, HGAT…KAQL, HLAS…NIDQ, HLGT…NVNH, and WLDT…NLKC. An SOCS box domain is found at 273–323; it reads SVEQALLLREGPPALSQLCRLCVRKCLGRNCHKTIHKLYLPDPLEKFLLYQ.

The protein belongs to the ankyrin SOCS box (ASB) family. As to quaternary structure, substrate-recognition component of the ECS(ASB11) complex, composed of ASB11, CUL5, ELOB, ELOC and RNF7/RBX2.

It is found in the endoplasmic reticulum. It functions in the pathway protein modification; protein ubiquitination. Functionally, substrate-recognition component of a cullin-5-RING E3 ubiquitin-protein ligase complex (ECS complex, also named CRL5 complex), which mediates the ubiquitination and subsequent proteasomal degradation of target proteins, such as BIK, DIRAS2 and RPN1. The ECS(ASB11) complex acts as a regulator of the endoplasmic reticulum unfolded protein response by mediating ubiquitination and degradation of BIK. This chain is Ankyrin repeat and SOCS box protein 11 (ASB11), found in Bos taurus (Bovine).